Here is a 594-residue protein sequence, read N- to C-terminus: Probable glucose transporter rco-3 (594 aa).

The Cytoplasmic portion of the chain corresponds to 1 to 13; the sequence is MAIFAMGWQKPDN. Residues 14–34 traverse the membrane as a helical segment; it reads VAGSSAPAIMVGLFVATGGLL. Topologically, residues 35–73 are extracellular; it reads LGYDTGTINGILAMKSFKDHFSTGYIDGNGQPGIYPKES. Residues 74-94 form a helical membrane-spanning segment; the sequence is ALIVAMLSAGTAIGALLAAPL. At 95–103 the chain is on the cytoplasmic side; that stretch reads GDHYGRRRS. The chain crosses the membrane as a helical span at residues 104–124; it reads LIGAIGIFVIGAILQVCAYNI. Residue D125 is a topological domain, extracellular. A helical membrane pass occupies residues 126–146; that stretch reads LLVAGRTVAGVGIGIVSVLVP. The Cytoplasmic segment spans residues 147-159; that stretch reads LYQSEMAPKWIRG. A helical membrane pass occupies residues 160-180; that stretch reads TLVCTYQLSITMGLLAAAVVN. Residues 181 to 193 lie on the Extracellular side of the membrane; the sequence is ILTYKLKTAAAYR. Residues 194–214 form a helical membrane-spanning segment; the sequence is VPIGLQLTWACVLALGLTVLP. Residues 215–293 lie on the Cytoplasmic side of the membrane; it reads ETPRYLIKRG…TGCCLQMLQQ (79 aa). The chain crosses the membrane as a helical span at residues 294–314; sequence LTGVNFIMYYGTTFFNNAGVG. Over 315 to 318 the chain is Extracellular; sequence NPFK. A helical membrane pass occupies residues 319-339; sequence ISLIMQVINTASTIPGLFVVE. Residues 340 to 345 lie on the Cytoplasmic side of the membrane; that stretch reads SWGRRR. The chain crosses the membrane as a helical span at residues 346-366; it reads LLMVGAIGMAICQLLIAAFAT. Topologically, residues 367-378 are extracellular; that stretch reads ASGSNNLSAQNK. Residue N372 is glycosylated (N-linked (GlcNAc...) asparagine). A helical transmembrane segment spans residues 379 to 403; sequence VLITFVAIYIFFFAASWGPVVWVVT. Residues 404 to 415 are Cytoplasmic-facing; it reads SEIYPLKVRAKS. The chain crosses the membrane as a helical span at residues 416 to 436; the sequence is MSITTASNWFLNFGIAYGTPY. Topologically, residues 437–454 are extracellular; it reads MQTNSAASDESSIDLGSK. Residues 455 to 475 form a helical membrane-spanning segment; the sequence is VFFVWGAFCIVAVGFVWCMVY. Residues 476–594 lie on the Cytoplasmic side of the membrane; sequence ETSKISLEQI…ASLGNIDLSY (119 aa). Residues 512-594 are disordered; the sequence is DLGFSDGGIP…ASLGNIDLSY (83 aa). The segment covering 524-576 has biased composition (low complexity); sequence QQLQQQPQQPQQQQQQHHQQQQHQLQVDLQQSQSRTSNSSTSQTDTGGSNNTG.

This sequence belongs to the major facilitator superfamily. Sugar transporter (TC 2.A.1.1) family.

It is found in the membrane. Its function is as follows. Probable glucose transporter. Involved in sugar transport, carbon catabolite repression, and initiation of conidiophore development. This is Probable glucose transporter rco-3 (rco-3) from Neurospora crassa (strain ATCC 24698 / 74-OR23-1A / CBS 708.71 / DSM 1257 / FGSC 987).